A 57-amino-acid chain; its full sequence is UPF0391 membrane protein bsl6560 (57 aa).

Transmembrane regions (helical) follow at residues 4–24 and 30–50; these read WVVTFLVIALIAGILGFGGIA and IAKIIFFIAVVLFLVSAVVGL.

Belongs to the UPF0391 family.

Its subcellular location is the cell membrane. The chain is UPF0391 membrane protein bsl6560 from Bradyrhizobium diazoefficiens (strain JCM 10833 / BCRC 13528 / IAM 13628 / NBRC 14792 / USDA 110).